The chain runs to 254 residues: Type III pantothenate kinase (254 aa).

Residue 6-13 (DVGNSNIV) coordinates ATP. Residues Tyr-100 and 107 to 110 (GADR) each bind substrate. Asp-109 (proton acceptor) is an active-site residue. Position 129 (Asp-129) interacts with K(+). Residue Thr-132 coordinates ATP. Thr-184 contacts substrate.

It belongs to the type III pantothenate kinase family. Homodimer. NH4(+) serves as cofactor. K(+) is required as a cofactor.

It is found in the cytoplasm. The enzyme catalyses (R)-pantothenate + ATP = (R)-4'-phosphopantothenate + ADP + H(+). The protein operates within cofactor biosynthesis; coenzyme A biosynthesis; CoA from (R)-pantothenate: step 1/5. Its function is as follows. Catalyzes the phosphorylation of pantothenate (Pan), the first step in CoA biosynthesis. The protein is Type III pantothenate kinase of Pelobacter propionicus (strain DSM 2379 / NBRC 103807 / OttBd1).